A 76-amino-acid chain; its full sequence is Conotoxin VnMEKL-012 (76 aa).

Positions 1 to 18 are cleaved as a signal peptide; sequence MKLTILFLVAAVLMSTQA. Residues 19–42 constitute a propeptide that is removed on maturation; it reads LIQHDGEKSQKAKMKFLTARTLSA. Intrachain disulfides connect Cys49–Cys65, Cys56–Cys70, and Cys64–Cys74.

The protein belongs to the conotoxin O2 superfamily. As to expression, expressed by the venom duct.

It localises to the secreted. The chain is Conotoxin VnMEKL-012 from Conus ventricosus (Mediterranean cone).